The sequence spans 90 residues: Putative defensin-like protein 168 (90 aa).

The N-terminal stretch at 1–27 is a signal peptide; that stretch reads MKYFTLFMISYIFISIFVFSHIHDVEA. 4 disulfide bridges follow: C32–C90, C43–C66, C51–C84, and C64–C86.

It belongs to the DEFL family.

It localises to the secreted. In Arabidopsis thaliana (Mouse-ear cress), this protein is Putative defensin-like protein 168.